We begin with the raw amino-acid sequence, 636 residues long: 1-phosphatidylinositol 4,5-bisphosphate phosphodiesterase zeta-1 (636 aa).

Residues 35 to 70 (CNTIHVKCIFKDNDRLKQGRITIEEFRTIYRIIAHR) form the EF-hand domain. The PI-PLC X-box domain maps to 155–299 (QDMTHPLSDY…LKFKILVRNK (145 aa)). Active-site residues include H170 and H215. The tract at residues 311-338 (KGFDKHGQVQECEEEEEAEQEEEENEVR) is disordered. Residues 318-345 (QVQECEEEEEAEQEEEENEVRDSEILDI) are a coiled coil. Residues 321–336 (ECEEEEEAEQEEEENE) are compositionally biased toward acidic residues. Residues 375–491 (LSDLVIYTKV…GYILKPHFLR (117 aa)) form the PI-PLC Y-box domain. The region spanning 491 to 617 (RDGKSIFNPN…KGYRRVPLFS (127 aa)) is the C2 domain.

Interacts via its C2 domain with PtdIns(3)P and, to a lesser extent, PtdIns(5)P in vitro. The cofactor is Ca(2+). As to expression, expressed specifically in testis.

Its subcellular location is the nucleus. It is found in the cytoplasm. The protein resides in the perinuclear region. The catalysed reaction is a 1,2-diacyl-sn-glycero-3-phospho-(1D-myo-inositol-4,5-bisphosphate) + H2O = 1D-myo-inositol 1,4,5-trisphosphate + a 1,2-diacyl-sn-glycerol + H(+). Its function is as follows. The production of the second messenger molecules diacylglycerol (DAG) and inositol 1,4,5-trisphosphate (IP3) is mediated by activated phosphatidylinositol-specific phospholipase C enzymes. In vitro, hydrolyzes PtdIns(4,5)P2 in a Ca(2+)-dependent manner. Triggers intracellular Ca(2+) oscillations in oocytes solely during M phase and is involved in inducing oocyte activation and initiating embryonic development up to the blastocyst stage. Is therefore a strong candidate for the egg-activating soluble sperm factor that is transferred from the sperm into the egg cytoplasm following gamete membrane fusion. May exert an inhibitory effect on phospholipase-C-coupled processes that depend on calcium ions and protein kinase C, including CFTR trafficking and function. This is 1-phosphatidylinositol 4,5-bisphosphate phosphodiesterase zeta-1 from Sus scrofa (Pig).